Here is a 436-residue protein sequence, read N- to C-terminus: Trigger factor (436 aa).

Residues 161-246 (GMRVTMDFIG…LIKVEEQILP (86 aa)) form the PPIase FKBP-type domain.

This sequence belongs to the FKBP-type PPIase family. Tig subfamily.

The protein resides in the cytoplasm. The enzyme catalyses [protein]-peptidylproline (omega=180) = [protein]-peptidylproline (omega=0). Functionally, involved in protein export. Acts as a chaperone by maintaining the newly synthesized protein in an open conformation. Functions as a peptidyl-prolyl cis-trans isomerase. The sequence is that of Trigger factor from Aeromonas salmonicida (strain A449).